The following is a 147-amino-acid chain: D-aminoacyl-tRNA deacylase (147 aa).

The Gly-cisPro motif, important for rejection of L-amino acids motif lies at 136–137 (GP).

It belongs to the DTD family. As to quaternary structure, homodimer.

Its subcellular location is the cytoplasm. The catalysed reaction is glycyl-tRNA(Ala) + H2O = tRNA(Ala) + glycine + H(+). It carries out the reaction a D-aminoacyl-tRNA + H2O = a tRNA + a D-alpha-amino acid + H(+). Its function is as follows. An aminoacyl-tRNA editing enzyme that deacylates mischarged D-aminoacyl-tRNAs. Also deacylates mischarged glycyl-tRNA(Ala), protecting cells against glycine mischarging by AlaRS. Acts via tRNA-based rather than protein-based catalysis; rejects L-amino acids rather than detecting D-amino acids in the active site. By recycling D-aminoacyl-tRNA to D-amino acids and free tRNA molecules, this enzyme counteracts the toxicity associated with the formation of D-aminoacyl-tRNA entities in vivo and helps enforce protein L-homochirality. The sequence is that of D-aminoacyl-tRNA deacylase from Streptococcus agalactiae serotype III (strain NEM316).